Consider the following 797-residue polypeptide: Xaa-Pro dipeptidyl-peptidase (797 aa).

Residues serine 370, aspartate 490, and histidine 521 each act as charge relay system in the active site.

The protein belongs to the peptidase S15 family. In terms of assembly, homodimer.

It is found in the cytoplasm. The enzyme catalyses Hydrolyzes Xaa-Pro-|- bonds to release unblocked, N-terminal dipeptides from substrates including Ala-Pro-|-p-nitroanilide and (sequentially) Tyr-Pro-|-Phe-Pro-|-Gly-Pro-|-Ile.. Removes N-terminal dipeptides sequentially from polypeptides having unsubstituted N-termini provided that the penultimate residue is proline. This Lacticaseibacillus casei (strain BL23) (Lactobacillus casei) protein is Xaa-Pro dipeptidyl-peptidase.